A 368-amino-acid polypeptide reads, in one-letter code: NAD(P)H-quinone oxidoreductase subunit 1, chloroplastic (368 aa).

A run of 9 helical transmembrane segments spans residues 27-47 (FLWIIFSILILMLGVTIGVLV), 97-117 (WLFNIGPILVLIPVFLSYLVI), 130-150 (IGVFFWIAVSSVVPLGLLMAG), 166-186 (AAQSISYEIPLALSVLSIALL), 204-224 (FLSWNLWRQPIGFIVFFIASL), 249-269 (YSGMKFAFFYLASYLNLLVSS), 270-290 (LFVTILYLGGWHFSIPFFSLF), 305-325 (VISIIIGIVITLVKSYLFLFI), and 348-368 (FLLPIALGNLLLTTSFQLFLL).

The protein belongs to the complex I subunit 1 family. In terms of assembly, NDH is composed of at least 16 different subunits, 5 of which are encoded in the nucleus.

The protein resides in the plastid. The protein localises to the chloroplast thylakoid membrane. The catalysed reaction is a plastoquinone + NADH + (n+1) H(+)(in) = a plastoquinol + NAD(+) + n H(+)(out). The enzyme catalyses a plastoquinone + NADPH + (n+1) H(+)(in) = a plastoquinol + NADP(+) + n H(+)(out). Its function is as follows. NDH shuttles electrons from NAD(P)H:plastoquinone, via FMN and iron-sulfur (Fe-S) centers, to quinones in the photosynthetic chain and possibly in a chloroplast respiratory chain. The immediate electron acceptor for the enzyme in this species is believed to be plastoquinone. Couples the redox reaction to proton translocation, and thus conserves the redox energy in a proton gradient. This is NAD(P)H-quinone oxidoreductase subunit 1, chloroplastic from Marchantia polymorpha (Common liverwort).